The chain runs to 501 residues: Probable Xaa-Pro aminopeptidase pepP (501 aa).

Positions 1 to 25 (MNYHSFLPLRRSSLSHSTTPPSKSR) are disordered. Residues 12-25 (SSLSHSTTPPSKSR) show a composition bias toward polar residues. Mn(2+) is bound by residues Asp298, Asp309, Glu432, and Glu472.

It belongs to the peptidase M24B family. Mn(2+) is required as a cofactor.

The catalysed reaction is Release of any N-terminal amino acid, including proline, that is linked to proline, even from a dipeptide or tripeptide.. In terms of biological role, catalyzes the removal of a penultimate prolyl residue from the N-termini of peptides. In Metarhizium acridum (strain CQMa 102), this protein is Probable Xaa-Pro aminopeptidase pepP (pepP).